A 408-amino-acid chain; its full sequence is Aminoacylase-1 (408 aa).

H80 contributes to the Zn(2+) binding site. D82 is an active-site residue. Position 113 (D113) interacts with Zn(2+). E147 serves as the catalytic Proton acceptor. E148, E175, and H373 together coordinate Zn(2+).

It belongs to the peptidase M20A family. In terms of assembly, homodimer. Interacts with SPHK1. The cofactor is Zn(2+).

It localises to the cytoplasm. It carries out the reaction an N-acyl-L-amino acid + H2O = an L-alpha-amino acid + a carboxylate. The catalysed reaction is N-acetyl-L-methionine + H2O = L-methionine + acetate. The enzyme catalyses N-acetyl-L-glutamine + H2O = L-glutamine + acetate. In terms of biological role, catalyzes the hydrolysis of N-acetylated amino acids to acetate and free amino acids. In Mus musculus (Mouse), this protein is Aminoacylase-1 (Acy1).